A 283-amino-acid chain; its full sequence is Pantothenate synthetase (283 aa).

Position 26 to 33 (26 to 33) interacts with ATP; sequence MGNLHAGH. Residue histidine 33 is the Proton donor of the active site. Glutamine 57 is a binding site for (R)-pantoate. Glutamine 57 is a binding site for beta-alanine. ATP is bound at residue 144–147; sequence GRKD. Glutamine 150 serves as a coordination point for (R)-pantoate. Residues leucine 173 and 181 to 184 contribute to the ATP site; that span reads MSSR.

The protein belongs to the pantothenate synthetase family. As to quaternary structure, homodimer.

The protein localises to the cytoplasm. It carries out the reaction (R)-pantoate + beta-alanine + ATP = (R)-pantothenate + AMP + diphosphate + H(+). It functions in the pathway cofactor biosynthesis; (R)-pantothenate biosynthesis; (R)-pantothenate from (R)-pantoate and beta-alanine: step 1/1. Functionally, catalyzes the condensation of pantoate with beta-alanine in an ATP-dependent reaction via a pantoyl-adenylate intermediate. The polypeptide is Pantothenate synthetase (Thiobacillus denitrificans (strain ATCC 25259 / T1)).